Here is a 103-residue protein sequence, read N- to C-terminus: Pyrimidine/purine nucleoside phosphorylase (103 aa).

The protein belongs to the nucleoside phosphorylase PpnP family.

The enzyme catalyses a purine D-ribonucleoside + phosphate = a purine nucleobase + alpha-D-ribose 1-phosphate. It catalyses the reaction adenosine + phosphate = alpha-D-ribose 1-phosphate + adenine. It carries out the reaction cytidine + phosphate = cytosine + alpha-D-ribose 1-phosphate. The catalysed reaction is guanosine + phosphate = alpha-D-ribose 1-phosphate + guanine. The enzyme catalyses inosine + phosphate = alpha-D-ribose 1-phosphate + hypoxanthine. It catalyses the reaction thymidine + phosphate = 2-deoxy-alpha-D-ribose 1-phosphate + thymine. It carries out the reaction uridine + phosphate = alpha-D-ribose 1-phosphate + uracil. The catalysed reaction is xanthosine + phosphate = alpha-D-ribose 1-phosphate + xanthine. Catalyzes the phosphorolysis of diverse nucleosides, yielding D-ribose 1-phosphate and the respective free bases. Can use uridine, adenosine, guanosine, cytidine, thymidine, inosine and xanthosine as substrates. Also catalyzes the reverse reactions. The polypeptide is Pyrimidine/purine nucleoside phosphorylase (Methylococcus capsulatus (strain ATCC 33009 / NCIMB 11132 / Bath)).